Reading from the N-terminus, the 532-residue chain is Tyrosine-protein kinase Src-1 (532 aa).

Positions 1 to 52 (MGATKSKPREGGPRSRSLDIVEGSHQPFTSLSASQTPNKSLDSHRPPAQPFG) are disordered. G2 is lipidated: N-myristoyl glycine. Over residues 7–19 (KPREGGPRSRSLD) the composition is skewed to basic and acidic residues. Over residues 26-40 (QPFTSLSASQTPNKS) the composition is skewed to polar residues. Residues 80 to 141 (GGVTTFVALY…PSNYVAPSDS (62 aa)) form the SH3 domain. The region spanning 147–244 (WYLGKITRRE…GLCHRLTTVC (98 aa)) is the SH2 domain. The Protein kinase domain occupies 266–519 (LRLELKLGQG…YLQAFLEDYF (254 aa)). ATP is bound by residues 272–280 (LGQGCFGEV) and K294. D385 functions as the Proton acceptor in the catalytic mechanism. Y415 is subject to Phosphotyrosine; by autocatalysis.

The protein belongs to the protein kinase superfamily. Tyr protein kinase family. SRC subfamily.

The protein resides in the cell membrane. The catalysed reaction is L-tyrosyl-[protein] + ATP = O-phospho-L-tyrosyl-[protein] + ADP + H(+). The protein is Tyrosine-protein kinase Src-1 (src-a) of Xenopus laevis (African clawed frog).